Consider the following 146-residue polypeptide: UPF0735 ACT domain-containing protein TTE2621 (146 aa).

One can recognise an ACT domain in the interval 71–146 (TFSMVLEHMP…GVRKIEVLGE (76 aa)).

This sequence belongs to the UPF0735 family.

The sequence is that of UPF0735 ACT domain-containing protein TTE2621 from Caldanaerobacter subterraneus subsp. tengcongensis (strain DSM 15242 / JCM 11007 / NBRC 100824 / MB4) (Thermoanaerobacter tengcongensis).